Here is a 90-residue protein sequence, read N- to C-terminus: Sec-independent protein translocase protein TatA (90 aa).

A helical membrane pass occupies residues 1–21 (MGISPWTLLIVLLIVLLVFGT). 2 stretches are compositionally biased toward basic and acidic residues: residues 42-59 (MKEG…EPSK) and 70-90 (SGEG…RHSS). Residues 42-90 (MKEGEEGAKEGEKSEPSKLEQPPEEEKESGEGHTIEGERSEQPRDRHSS) form a disordered region.

The protein belongs to the TatA/E family. The Tat system comprises two distinct complexes: a TatABC complex, containing multiple copies of TatA, TatB and TatC subunits, and a separate TatA complex, containing only TatA subunits. Substrates initially bind to the TatABC complex, which probably triggers association of the separate TatA complex to form the active translocon.

The protein resides in the cell inner membrane. Functionally, part of the twin-arginine translocation (Tat) system that transports large folded proteins containing a characteristic twin-arginine motif in their signal peptide across membranes. TatA could form the protein-conducting channel of the Tat system. In Alkalilimnicola ehrlichii (strain ATCC BAA-1101 / DSM 17681 / MLHE-1), this protein is Sec-independent protein translocase protein TatA.